A 206-amino-acid polypeptide reads, in one-letter code: Small ribosomal subunit protein uS4 (206 aa).

Residues S96–A158 form the S4 RNA-binding domain.

This sequence belongs to the universal ribosomal protein uS4 family. As to quaternary structure, part of the 30S ribosomal subunit. Contacts protein S5. The interaction surface between S4 and S5 is involved in control of translational fidelity.

In terms of biological role, one of the primary rRNA binding proteins, it binds directly to 16S rRNA where it nucleates assembly of the body of the 30S subunit. Its function is as follows. With S5 and S12 plays an important role in translational accuracy. This Francisella tularensis subsp. mediasiatica (strain FSC147) protein is Small ribosomal subunit protein uS4.